Here is a 122-residue protein sequence, read N- to C-terminus: Small ribosomal subunit protein uS13 (122 aa).

Positions 95-122 are disordered; sequence SLPVRGQRTHTNARTRKGPAKSIAGKKK.

The protein belongs to the universal ribosomal protein uS13 family. Part of the 30S ribosomal subunit. Forms a loose heterodimer with protein S19. Forms two bridges to the 50S subunit in the 70S ribosome.

Its function is as follows. Located at the top of the head of the 30S subunit, it contacts several helices of the 16S rRNA. In the 70S ribosome it contacts the 23S rRNA (bridge B1a) and protein L5 of the 50S subunit (bridge B1b), connecting the 2 subunits; these bridges are implicated in subunit movement. Contacts the tRNAs in the A and P-sites. This Mesorhizobium japonicum (strain LMG 29417 / CECT 9101 / MAFF 303099) (Mesorhizobium loti (strain MAFF 303099)) protein is Small ribosomal subunit protein uS13.